A 156-amino-acid polypeptide reads, in one-letter code: SsrA-binding protein (156 aa).

This sequence belongs to the SmpB family.

The protein localises to the cytoplasm. Functionally, required for rescue of stalled ribosomes mediated by trans-translation. Binds to transfer-messenger RNA (tmRNA), required for stable association of tmRNA with ribosomes. tmRNA and SmpB together mimic tRNA shape, replacing the anticodon stem-loop with SmpB. tmRNA is encoded by the ssrA gene; the 2 termini fold to resemble tRNA(Ala) and it encodes a 'tag peptide', a short internal open reading frame. During trans-translation Ala-aminoacylated tmRNA acts like a tRNA, entering the A-site of stalled ribosomes, displacing the stalled mRNA. The ribosome then switches to translate the ORF on the tmRNA; the nascent peptide is terminated with the 'tag peptide' encoded by the tmRNA and targeted for degradation. The ribosome is freed to recommence translation, which seems to be the essential function of trans-translation. The polypeptide is SsrA-binding protein (Shouchella clausii (strain KSM-K16) (Alkalihalobacillus clausii)).